Consider the following 249-residue polypeptide: uncharacterized protein (249 aa).

Residue 11–34 coordinates NADP(+); the sequence is IFGGRSQIGGELARRLAAGATMVL. Ser-142 is a substrate binding site. Tyr-155 acts as the Proton acceptor in catalysis.

It belongs to the short-chain dehydrogenases/reductases (SDR) family.

This is an uncharacterized protein from Mycobacterium tuberculosis (strain ATCC 25618 / H37Rv).